The chain runs to 126 residues: Holo-[acyl-carrier-protein] synthase (126 aa).

Mg(2+) is bound by residues aspartate 9 and glutamate 58.

The protein belongs to the P-Pant transferase superfamily. AcpS family. Requires Mg(2+) as cofactor.

The protein localises to the cytoplasm. The catalysed reaction is apo-[ACP] + CoA = holo-[ACP] + adenosine 3',5'-bisphosphate + H(+). Transfers the 4'-phosphopantetheine moiety from coenzyme A to a Ser of acyl-carrier-protein. This chain is Holo-[acyl-carrier-protein] synthase, found in Vibrio campbellii (strain ATCC BAA-1116).